Here is a 290-residue protein sequence, read N- to C-terminus: Pyridoxal kinase PdxY (290 aa).

Ser14 serves as a coordination point for substrate. 2 residues coordinate ATP: Asp116 and Glu153. Asp226 serves as a coordination point for substrate.

Belongs to the pyridoxine kinase family. PdxY subfamily. As to quaternary structure, homodimer. It depends on Mg(2+) as a cofactor.

It catalyses the reaction pyridoxal + ATP = pyridoxal 5'-phosphate + ADP + H(+). The protein operates within cofactor metabolism; pyridoxal 5'-phosphate salvage; pyridoxal 5'-phosphate from pyridoxal: step 1/1. In terms of biological role, pyridoxal kinase involved in the salvage pathway of pyridoxal 5'-phosphate (PLP). Catalyzes the phosphorylation of pyridoxal to PLP. This chain is Pyridoxal kinase PdxY, found in Rubrobacter xylanophilus (strain DSM 9941 / JCM 11954 / NBRC 16129 / PRD-1).